A 158-amino-acid polypeptide reads, in one-letter code: Arginine repressor (158 aa).

Belongs to the ArgR family.

The protein localises to the cytoplasm. Its pathway is amino-acid biosynthesis; L-arginine biosynthesis [regulation]. Its function is as follows. Regulates arginine biosynthesis genes. The polypeptide is Arginine repressor (Phocaeicola vulgatus (strain ATCC 8482 / DSM 1447 / JCM 5826 / CCUG 4940 / NBRC 14291 / NCTC 11154) (Bacteroides vulgatus)).